A 134-amino-acid chain; its full sequence is Arsenate reductase (134 aa).

Residues C11, C83, and C90 each act as nucleophile in the active site. Disulfide bonds link C11/C83 and C83/C90.

The protein belongs to the low molecular weight phosphotyrosine protein phosphatase family. Thioredoxin-coupled ArsC subfamily.

The protein localises to the cytoplasm. It carries out the reaction arsenate + [thioredoxin]-dithiol + H(+) = arsenite + [thioredoxin]-disulfide + H2O. Functionally, catalyzes the reduction of arsenate [As(V)] to arsenite [As(III)]. In Brevibacillus brevis (strain 47 / JCM 6285 / NBRC 100599), this protein is Arsenate reductase.